We begin with the raw amino-acid sequence, 161 residues long: Vasotocin-neurophysin VT (161 aa).

Residues 1 to 19 form the signal peptide; that stretch reads MAEPSLPLSFLCLLALSSA. Cys-20 and Cys-25 are disulfide-bonded. A Glycine amide modification is found at Gly-28. Disulfide bonds link Cys-41–Cys-85, Cys-44–Cys-58, Cys-52–Cys-75, Cys-59–Cys-65, Cys-92–Cys-104, Cys-98–Cys-116, and Cys-105–Cys-110.

Belongs to the vasopressin/oxytocin family. In terms of processing, seven disulfide bonds are present in neurophysin.

It localises to the secreted. Vasotocin is an antidiuretic hormone. This Gallus gallus (Chicken) protein is Vasotocin-neurophysin VT.